The following is a 423-amino-acid chain: Histidine--tRNA ligase (423 aa).

It belongs to the class-II aminoacyl-tRNA synthetase family. In terms of assembly, homodimer.

It is found in the cytoplasm. It carries out the reaction tRNA(His) + L-histidine + ATP = L-histidyl-tRNA(His) + AMP + diphosphate + H(+). The polypeptide is Histidine--tRNA ligase (hisS) (Haemophilus influenzae (strain ATCC 51907 / DSM 11121 / KW20 / Rd)).